Consider the following 368-residue polypeptide: Branched-chain-amino-acid aminotransferase (368 aa).

Arg-101 is a pyridoxal 5'-phosphate binding site. Residue Lys-204 is modified to N6-(pyridoxal phosphate)lysine. Residues Tyr-209 and 271-272 (IT) each bind pyridoxal 5'-phosphate. Residue Lys-299 forms an Isoglutamyl lysine isopeptide (Lys-Gln) (interchain with Q-Cter in protein Pup) linkage. Thr-314 serves as a coordination point for pyridoxal 5'-phosphate.

The protein belongs to the class-IV pyridoxal-phosphate-dependent aminotransferase family. Homodimer. Pyridoxal 5'-phosphate is required as a cofactor.

The enzyme catalyses L-isoleucine + 2-oxoglutarate = (S)-3-methyl-2-oxopentanoate + L-glutamate. The catalysed reaction is L-valine + 2-oxoglutarate = 3-methyl-2-oxobutanoate + L-glutamate. It carries out the reaction L-leucine + 2-oxoglutarate = 4-methyl-2-oxopentanoate + L-glutamate. Its pathway is amino-acid biosynthesis; L-isoleucine biosynthesis; L-isoleucine from 2-oxobutanoate: step 4/4. The protein operates within amino-acid biosynthesis; L-leucine biosynthesis; L-leucine from 3-methyl-2-oxobutanoate: step 4/4. It participates in amino-acid biosynthesis; L-valine biosynthesis; L-valine from pyruvate: step 4/4. Inhibited by ammonium sulfate at millimolar concentrations and by O-benzylhydroxylamine (Obe). Its function is as follows. Catalyzes the reversible transfers of an amino group from glutamate to the alpha-ketoacid of the respective amino acid in the final step in the biosynthesis of branchedchain amino acids. The amino acids can be ranked in the following order with respect to their efficiency as amino donor: Leu &gt; Ile &gt; Val. The chain is Branched-chain-amino-acid aminotransferase (ilvE) from Mycolicibacterium smegmatis (strain ATCC 700084 / mc(2)155) (Mycobacterium smegmatis).